The primary structure comprises 217 residues: Ras-related protein Rab-19 (217 aa).

The GTP site is built by Ser26, Val28, Gly29, Lys30, Thr31, Cys32, Tyr42, Thr43, Glu44, Thr45, and Thr49. Thr31 serves as a coordination point for Mg(2+). The short motif at 39 to 54 (SGVYTETQQNTIGVDF) is the Switch 1 element. Mg(2+)-binding residues include Thr49 and Asp72. A Switch 2 motif is present at residues 74-89 (AGQERFRTITQSYYRS). GTP-binding residues include Gly75, Asn130, Lys131, Asp133, Ser161, Ala162, and Lys163. S-geranylgeranyl cysteine attachment occurs at residues Cys215 and Cys217. Cys217 carries the post-translational modification Cysteine methyl ester.

It belongs to the small GTPase superfamily. Rab family. Mg(2+) serves as cofactor.

It is found in the cell membrane. It carries out the reaction GTP + H2O = GDP + phosphate + H(+). With respect to regulation, regulated by guanine nucleotide exchange factors (GEFs) which promote the exchange of bound GDP for free GTP. Regulated by GTPase activating proteins (GAPs) which increase the GTP hydrolysis activity. Inhibited by GDP dissociation inhibitors (GDIs). The small GTPases Rab are key regulators of intracellular membrane trafficking, from the formation of transport vesicles to their fusion with membranes. Rabs cycle between an inactive GDP-bound form and an active GTP-bound form that is able to recruit to membranes different set of downstream effectors directly responsible for vesicle formation, movement, tethering and fusion. The polypeptide is Ras-related protein Rab-19 (Homo sapiens (Human)).